Here is a 497-residue protein sequence, read N- to C-terminus: Cytochrome P450 monooxygenase 151 (497 aa).

A helical transmembrane segment spans residues 1 to 21; it reads MTDLVPVYYAFAGVVAALLFY. N-linked (GlcNAc...) asparagine glycosylation is found at Asn-292 and Asn-397. Heme is bound at residue Cys-441.

This sequence belongs to the cytochrome P450 family. Requires heme as cofactor.

The protein resides in the membrane. It participates in secondary metabolite biosynthesis. Functionally, cytochrome P450 monooxygenase that is able to use dehydroabietic acid and testosterone as substrates for oxidation, suggesting that the natural substrate(s) may be structurally related to steroid compounds. This chain is Cytochrome P450 monooxygenase 151, found in Postia placenta (strain ATCC 44394 / Madison 698-R) (Brown rot fungus).